A 425-amino-acid chain; its full sequence is Serine--tRNA ligase (425 aa).

232 to 234 (TSE) provides a ligand contact to L-serine. ATP-binding positions include 263-265 (RRE) and Val279. Glu286 provides a ligand contact to L-serine. 350-353 (EAVS) lines the ATP pocket. Thr387 is a binding site for L-serine.

This sequence belongs to the class-II aminoacyl-tRNA synthetase family. Type-1 seryl-tRNA synthetase subfamily. In terms of assembly, homodimer. The tRNA molecule binds across the dimer.

The protein localises to the cytoplasm. It carries out the reaction tRNA(Ser) + L-serine + ATP = L-seryl-tRNA(Ser) + AMP + diphosphate + H(+). The enzyme catalyses tRNA(Sec) + L-serine + ATP = L-seryl-tRNA(Sec) + AMP + diphosphate + H(+). The protein operates within aminoacyl-tRNA biosynthesis; selenocysteinyl-tRNA(Sec) biosynthesis; L-seryl-tRNA(Sec) from L-serine and tRNA(Sec): step 1/1. Catalyzes the attachment of serine to tRNA(Ser). Is also able to aminoacylate tRNA(Sec) with serine, to form the misacylated tRNA L-seryl-tRNA(Sec), which will be further converted into selenocysteinyl-tRNA(Sec). In Methanoculleus marisnigri (strain ATCC 35101 / DSM 1498 / JR1), this protein is Serine--tRNA ligase.